The primary structure comprises 24 residues: Large ribosomal subunit protein uL10 (24 aa).

The protein belongs to the universal ribosomal protein uL10 family. As to quaternary structure, part of the ribosomal stalk of the 50S ribosomal subunit. The N-terminus interacts with L11 and the large rRNA to form the base of the stalk. The C-terminus forms an elongated spine to which L12 dimers bind in a sequential fashion forming a multimeric L10(L12)X complex.

Forms part of the ribosomal stalk, playing a central role in the interaction of the ribosome with GTP-bound translation factors. In Enterobacter cloacae, this protein is Large ribosomal subunit protein uL10 (rplJ).